The following is a 455-amino-acid chain: Argininosuccinate lyase (455 aa).

Belongs to the lyase 1 family. Argininosuccinate lyase subfamily.

The protein localises to the cytoplasm. It catalyses the reaction 2-(N(omega)-L-arginino)succinate = fumarate + L-arginine. The protein operates within amino-acid biosynthesis; L-arginine biosynthesis; L-arginine from L-ornithine and carbamoyl phosphate: step 3/3. In Roseiflexus castenholzii (strain DSM 13941 / HLO8), this protein is Argininosuccinate lyase.